Reading from the N-terminus, the 724-residue chain is Small conductance calcium-activated potassium channel protein 3 (724 aa).

The segment covering 1-11 (MDTSGHFHDSG) has biased composition (basic and acidic residues). Disordered regions lie at residues 1–161 (MDTS…RDSN) and 232–251 (ATHN…FPKA). The segment covering 34-58 (QPPPPPPPPAPPAAPQQPPGPPLQP) has biased composition (pro residues). The span at 59–88 (QPLQLQQQQQQQQQQPPHPLSQLAQLQSQP) shows a compositional bias: low complexity. Polar residues predominate over residues 105–125 (PSSNSTAILHPSSRQGSQLNL). The span at 131-140 (GHSPSSTATS) shows a compositional bias: low complexity. At Ser-160 the chain carries Phosphoserine. The segment covering 232 to 249 (ATHNHQHAGTTASSTTFP) has biased composition (polar residues). A helical transmembrane segment spans residues 281 to 301 (LIFGMFGIVVMVIETELSWGL). The chain crosses the membrane as a helical span at residues 308 to 328 (FSLALKCLISLSTIILLGLII). Residues 359–379 (ISLEMLVCAIHPIPGEYKFFW) traverse the membrane as a helical segment. A helical transmembrane segment spans residues 398 to 418 (IILSIPMFLRLYLIARVMLLH). Residues 447-467 (LMTICPGTVLLVFSISLWIIA) form a helical membrane-spanning segment. The segment at residues 487–507 (FLGAMWLISITFLSIGYGDMV) is an intramembrane region (pore-forming). The chain crosses the membrane as a helical span at residues 516–536 (VCLLTGIMGAGCTALVVAVVA). Residues 554-630 (DTQLTKRIKN…LVDLSKMQNV (77 aa)) are calmodulin-binding. The stretch at 635 to 662 (ITELNDRSEDLEKQIGSLESKLEHLTAS) forms a coiled coil. The interval 702–724 (LSDSPIGVSSTSFPTPYTSSSSC) is disordered. Residues 710 to 724 (SSTSFPTPYTSSSSC) are compositionally biased toward low complexity.

Belongs to the potassium channel KCNN family. KCa2.3/KCNN3 subfamily. As to quaternary structure, homodimer. Heteromultimer with KCNN2 or KCNN1; this modulates plasma membrane expression and consequently the small conductance calcium-activated potassium channel activity. The complex is composed of 4 channel subunits each of which binds to a calmodulin subunit which regulates the channel activity through calcium-binding. Interacts with CALM1.

The protein resides in the cell membrane. It localises to the cytoplasm. The protein localises to the myofibril. Its subcellular location is the sarcomere. It is found in the z line. The enzyme catalyses K(+)(in) = K(+)(out). With respect to regulation, inhibited by bee venom neurotoxin apamin. Its function is as follows. Small conductance calcium-activated potassium channel that mediates the voltage-independent transmembrane transfer of potassium across the cell membrane through a constitutive interaction with calmodulin which binds the intracellular calcium allowing its opening. The current is characterized by a voltage-independent activation, an intracellular calcium concentration increase-dependent activation and a single-channel conductance of 10 picosiemens. Also presents an inwardly rectifying current, thus reducing its already small outward conductance of potassium ions, which is particularly the case when the membrane potential displays positive values, above + 20 mV. Activation is followed by membrane hyperpolarization. Thought to regulate neuronal excitability by contributing to the slow component of synaptic afterhyperpolarization. The chain is Small conductance calcium-activated potassium channel protein 3 from Sus scrofa (Pig).